We begin with the raw amino-acid sequence, 734 residues long: Photosystem I P700 chlorophyll a apoprotein A2 (734 aa).

The next 8 membrane-spanning stretches (helical) occupy residues 46-69 (IFAS…FHVA), 135-158 (LYTG…LHLQ), 175-199 (LNHH…HVAI), 273-291 (MAHH…GHMY), 330-353 (IHFQ…QHMY), 369-395 (AALY…IFFI), 417-439 (AIIS…LYVH), and 517-535 (FLVH…LILV). Positions 559 and 568 each coordinate [4Fe-4S] cluster. 2 consecutive transmembrane segments (helical) span residues 575–596 (AFYL…YWHW) and 643–665 (LSVW…MFLI). 3 residues coordinate chlorophyll a: His-654, Met-662, and Tyr-670. Position 671 (Trp-671) interacts with phylloquinone. Residues 707–727 (LVGLAHFSVGYIFTYAAFLIA) traverse the membrane as a helical segment.

It belongs to the PsaA/PsaB family. As to quaternary structure, the PsaA/B heterodimer binds the P700 chlorophyll special pair and subsequent electron acceptors. PSI consists of a core antenna complex that captures photons, and an electron transfer chain that converts photonic excitation into a charge separation. The eukaryotic PSI reaction center is composed of at least 11 subunits. P700 is a chlorophyll a/chlorophyll a' dimer, A0 is one or more chlorophyll a, A1 is one or both phylloquinones and FX is a shared 4Fe-4S iron-sulfur center. serves as cofactor.

It localises to the plastid. The protein resides in the chloroplast thylakoid membrane. The catalysed reaction is reduced [plastocyanin] + hnu + oxidized [2Fe-2S]-[ferredoxin] = oxidized [plastocyanin] + reduced [2Fe-2S]-[ferredoxin]. In terms of biological role, psaA and PsaB bind P700, the primary electron donor of photosystem I (PSI), as well as the electron acceptors A0, A1 and FX. PSI is a plastocyanin-ferredoxin oxidoreductase, converting photonic excitation into a charge separation, which transfers an electron from the donor P700 chlorophyll pair to the spectroscopically characterized acceptors A0, A1, FX, FA and FB in turn. Oxidized P700 is reduced on the lumenal side of the thylakoid membrane by plastocyanin. The sequence is that of Photosystem I P700 chlorophyll a apoprotein A2 from Lobularia maritima (Sweet alyssum).